Consider the following 183-residue polypeptide: Ferritin light chain 1 (183 aa).

Residues 7 to 156 (QNYSTEVEAA…NHLTNLRRVA (150 aa)) enclose the Ferritin-like diiron domain. Residues E54, E57, E58, E61, and E64 each contribute to the Fe cation site.

It belongs to the ferritin family. Oligomer of 24 subunits. There are two types of subunits: L (light) chain and H (heavy) chain. The major chain can be light or heavy, depending on the species and tissue type. The functional molecule forms a roughly spherical shell with a diameter of 12 nm and contains a central cavity into which the insoluble mineral iron core is deposited. Interacts with NCOA4. In terms of tissue distribution, in rat liver, the light chain is the major chain.

It localises to the cytoplasmic vesicle. The protein resides in the autophagosome. Its subcellular location is the cytoplasm. The protein localises to the autolysosome. Its function is as follows. Stores iron in a soluble, non-toxic, readily available form. Important for iron homeostasis. Iron is taken up in the ferrous form and deposited as ferric hydroxides after oxidation. Also plays a role in delivery of iron to cells. Mediates iron uptake in capsule cells of the developing kidney. Delivery to lysosomes by the cargo receptor NCOA4 for autophagic degradation and release or iron. The sequence is that of Ferritin light chain 1 (Ftl1) from Rattus norvegicus (Rat).